The primary structure comprises 388 residues: Chalcone synthase (388 aa).

Cysteine 164 is a catalytic residue.

It belongs to the thiolase-like superfamily. Chalcone/stilbene synthases family.

The enzyme catalyses (E)-4-coumaroyl-CoA + 3 malonyl-CoA + 3 H(+) = 2',4,4',6'-tetrahydroxychalcone + 3 CO2 + 4 CoA. It functions in the pathway secondary metabolite biosynthesis; flavonoid biosynthesis. Its function is as follows. The primary product of this enzyme is 4,2',4',6'-tetrahydroxychalcone (also termed naringenin-chalcone or chalcone) which can under specific conditions spontaneously isomerize into naringenin. The protein is Chalcone synthase (CHS) of Vigna unguiculata (Cowpea).